A 575-amino-acid chain; its full sequence is Lysine--tRNA ligase (575 aa).

Residues glutamate 412 and glutamate 419 each coordinate Mg(2+).

It belongs to the class-II aminoacyl-tRNA synthetase family. Homodimer. It depends on Mg(2+) as a cofactor.

The protein localises to the cytoplasm. It catalyses the reaction tRNA(Lys) + L-lysine + ATP = L-lysyl-tRNA(Lys) + AMP + diphosphate. The sequence is that of Lysine--tRNA ligase from Bacteroides fragilis (strain ATCC 25285 / DSM 2151 / CCUG 4856 / JCM 11019 / LMG 10263 / NCTC 9343 / Onslow / VPI 2553 / EN-2).